A 644-amino-acid chain; its full sequence is uncharacterized protein (644 aa).

The interval 1 to 35 (MKANGLDNDPARTGMERTDIDSEHPEAQPLLNNNH) is disordered. Topologically, residues 1 to 90 (MKANGLDNDP…ILNILILINT (90 aa)) are cytoplasmic. Positions 14-26 (GMERTDIDSEHPE) are enriched in basic and acidic residues. 3 positions are modified to phosphoserine: Ser-22, Ser-56, and Ser-63. A helical transmembrane segment spans residues 91 to 111 (IWLVTTLISDFFFNINILFGF). Residues 112-122 (SNRYASFNDLT) are Vacuolar-facing. Residues 123–143 (LIFISIIANSFNLWFNKLGLY) traverse the membrane as a helical segment. The Cytoplasmic portion of the chain corresponds to 144–147 (SALD). Residues 148-168 (YSLNVTLCVLTLFNLALTYLI) form a helical membrane-spanning segment. Residues 169-174 (KYTRQR) lie on the Vacuolar side of the membrane. Residues 175–195 (IGFVGTFTYLWTSFSFFIGAI) traverse the membrane as a helical segment. The Cytoplasmic portion of the chain corresponds to 196–271 (LDWYLLFYNN…EWVSIGFRNT (76 aa)). A disordered region spans residues 225–251 (NENHTNSTENRDRSQYGSGSPTPTHRS). A compositionally biased stretch (polar residues) spans 239–251 (QYGSGSPTPTHRS). The residue at position 244 (Ser-244) is a Phosphoserine. Residues 272 to 292 (IKFLILIFFALFTLNTLLTTL) form a helical membrane-spanning segment. At 293-644 (DTYRLTHKLP…IGELGKLTED (352 aa)) the chain is on the vacuolar side. Positions 348-619 (PIILFEHGGY…IVEGGHEIYK (272 aa)) constitute an AB hydrolase-1 domain. The segment at 469–492 (GRGDGDDGDDGNGNDGDGRNHDKT) is disordered.

The protein localises to the vacuole membrane. This is an uncharacterized protein from Saccharomyces cerevisiae (strain ATCC 204508 / S288c) (Baker's yeast).